Here is a 326-residue protein sequence, read N- to C-terminus: tRNA-modifying protein YgfZ (326 aa).

Folate contacts are provided by Trp-27 and Trp-189.

Belongs to the tRNA-modifying YgfZ family.

The protein localises to the cytoplasm. In terms of biological role, folate-binding protein involved in regulating the level of ATP-DnaA and in the modification of some tRNAs. It is probably a key factor in regulatory networks that act via tRNA modification, such as initiation of chromosomal replication. This Shigella boydii serotype 4 (strain Sb227) protein is tRNA-modifying protein YgfZ.